The following is a 61-amino-acid chain: Small ribosomal subunit protein uS14 (61 aa).

Zn(2+) is bound by residues cysteine 24, cysteine 27, cysteine 40, and cysteine 43.

It belongs to the universal ribosomal protein uS14 family. Zinc-binding uS14 subfamily. In terms of assembly, part of the 30S ribosomal subunit. Contacts proteins S3 and S10. Requires Zn(2+) as cofactor.

Binds 16S rRNA, required for the assembly of 30S particles and may also be responsible for determining the conformation of the 16S rRNA at the A site. The chain is Small ribosomal subunit protein uS14 from Ureaplasma parvum serovar 3 (strain ATCC 27815 / 27 / NCTC 11736).